The following is a 152-amino-acid chain: Small ribosomal subunit protein uS13 (152 aa).

This sequence belongs to the universal ribosomal protein uS13 family.

Its subcellular location is the cytoplasm. Functionally, located at the top of the head of the 40S subunit, it contacts several helices of the 18S rRNA. This chain is Small ribosomal subunit protein uS13 (RPS18), found in Branchiostoma belcheri (Amphioxus).